A 414-amino-acid polypeptide reads, in one-letter code: Multifunctional CCA protein (414 aa).

Gly-8 and Arg-11 together coordinate ATP. CTP-binding residues include Gly-8 and Arg-11. Positions 21 and 23 each coordinate Mg(2+). Arg-91, Arg-137, and Arg-140 together coordinate ATP. CTP-binding residues include Arg-91, Arg-137, and Arg-140. Positions 228–329 constitute an HD domain; sequence TGIHTLMVLE…VKLFDKGDFW (102 aa).

It belongs to the tRNA nucleotidyltransferase/poly(A) polymerase family. Bacterial CCA-adding enzyme type 1 subfamily. In terms of assembly, monomer. Can also form homodimers and oligomers. The cofactor is Mg(2+). Ni(2+) is required as a cofactor.

It catalyses the reaction a tRNA precursor + 2 CTP + ATP = a tRNA with a 3' CCA end + 3 diphosphate. It carries out the reaction a tRNA with a 3' CCA end + 2 CTP + ATP = a tRNA with a 3' CCACCA end + 3 diphosphate. In terms of biological role, catalyzes the addition and repair of the essential 3'-terminal CCA sequence in tRNAs without using a nucleic acid template. Adds these three nucleotides in the order of C, C, and A to the tRNA nucleotide-73, using CTP and ATP as substrates and producing inorganic pyrophosphate. tRNA 3'-terminal CCA addition is required both for tRNA processing and repair. Also involved in tRNA surveillance by mediating tandem CCA addition to generate a CCACCA at the 3' terminus of unstable tRNAs. While stable tRNAs receive only 3'-terminal CCA, unstable tRNAs are marked with CCACCA and rapidly degraded. This chain is Multifunctional CCA protein, found in Shewanella frigidimarina (strain NCIMB 400).